We begin with the raw amino-acid sequence, 329 residues long: NADH-quinone oxidoreductase subunit H (329 aa).

A run of 8 helical transmembrane segments spans residues 11–31 (IVVAILKAIVILLVVVVCGAL), 81–101 (LIFTLAPIVAMSALLMAFAVV), 114–134 (IGLLFFFAMAGLAVYAVLFAG), 154–174 (ISYEVFMALALMGIVAQTGSF), 187–207 (TWFIIPQFLGFCTFFIAGVAV), 238–258 (FFVGEYIGIVLISALLVTLFF), 270–290 (QLSFIWFALKTAFFIMLFILL), and 309–329 (FCLPLTLLNLLVTGAFVLAAQ).

It belongs to the complex I subunit 1 family. In terms of assembly, NDH-1 is composed of 13 different subunits. Subunits NuoA, H, J, K, L, M, N constitute the membrane sector of the complex.

Its subcellular location is the cell inner membrane. It catalyses the reaction a quinone + NADH + 5 H(+)(in) = a quinol + NAD(+) + 4 H(+)(out). Its function is as follows. NDH-1 shuttles electrons from NADH, via FMN and iron-sulfur (Fe-S) centers, to quinones in the respiratory chain. The immediate electron acceptor for the enzyme in this species is believed to be ubiquinone. Couples the redox reaction to proton translocation (for every two electrons transferred, four hydrogen ions are translocated across the cytoplasmic membrane), and thus conserves the redox energy in a proton gradient. This subunit may bind ubiquinone. This Azotobacter vinelandii (strain DJ / ATCC BAA-1303) protein is NADH-quinone oxidoreductase subunit H.